The following is a 423-amino-acid chain: Serine hydroxymethyltransferase (423 aa).

Residues leucine 120 and glycine 124–leucine 126 contribute to the (6S)-5,6,7,8-tetrahydrofolate site. An N6-(pyridoxal phosphate)lysine modification is found at lysine 229. Serine 353 to phenylalanine 355 lines the (6S)-5,6,7,8-tetrahydrofolate pocket.

Belongs to the SHMT family. Homodimer. It depends on pyridoxal 5'-phosphate as a cofactor.

The protein localises to the cytoplasm. It carries out the reaction (6R)-5,10-methylene-5,6,7,8-tetrahydrofolate + glycine + H2O = (6S)-5,6,7,8-tetrahydrofolate + L-serine. It functions in the pathway one-carbon metabolism; tetrahydrofolate interconversion. It participates in amino-acid biosynthesis; glycine biosynthesis; glycine from L-serine: step 1/1. In terms of biological role, catalyzes the reversible interconversion of serine and glycine with tetrahydrofolate (THF) serving as the one-carbon carrier. This reaction serves as the major source of one-carbon groups required for the biosynthesis of purines, thymidylate, methionine, and other important biomolecules. Also exhibits THF-independent aldolase activity toward beta-hydroxyamino acids, producing glycine and aldehydes, via a retro-aldol mechanism. This is Serine hydroxymethyltransferase from Prochlorococcus marinus (strain MIT 9301).